The following is a 444-amino-acid chain: MKRIVILGAGESGAGAAVLAKVKGFETFVSDMSAIKDKYKDLLDSHHIAWEEGHHTEELILNADEVIKSPGIPNDAPLILKLKAQGTPVISEIEFAGRYTDAKMICITGSNGKTTTTSLIYHIFKSADLNVGLAGNIGKSLALQVAEEHHDYYIIELSSFQLDNMYNFRANIAVLMNITPDHLDRYDHCMQNYIDAKFRITQNQTTDDAFIFWNDDPIIKQELAKHGLKAHLYPFAAVKEDGAIAYVEDHEVKITEPIAFNMEQEELALTGQHNLYNSLAAGISANLAGITKENIRKALSDFKGVEHRLEKVARVRGIDFINDSKATNVNSCWYALQSMTTKTVLILGGKDKGNDYTEIEDLVREKCSALVYLGLHNEKLHAFFDRFGLPVADVQTGMKDAVEAAYKLAKKGETVLLSPCCASFDLFKSYEDRGDQFKKYVREL.

109–115 (GSNGKTT) is an ATP binding site.

This sequence belongs to the MurCDEF family.

It is found in the cytoplasm. It catalyses the reaction UDP-N-acetyl-alpha-D-muramoyl-L-alanine + D-glutamate + ATP = UDP-N-acetyl-alpha-D-muramoyl-L-alanyl-D-glutamate + ADP + phosphate + H(+). The protein operates within cell wall biogenesis; peptidoglycan biosynthesis. Its function is as follows. Cell wall formation. Catalyzes the addition of glutamate to the nucleotide precursor UDP-N-acetylmuramoyl-L-alanine (UMA). This chain is UDP-N-acetylmuramoylalanine--D-glutamate ligase, found in Bacteroides thetaiotaomicron (strain ATCC 29148 / DSM 2079 / JCM 5827 / CCUG 10774 / NCTC 10582 / VPI-5482 / E50).